A 262-amino-acid polypeptide reads, in one-letter code: Small ribosomal subunit protein uS2 (262 aa).

Residues 224-262 form a disordered region; sequence GKQGQDDAQQETADDNAANETVSEDSLKNLKNSVEGKED.

This sequence belongs to the universal ribosomal protein uS2 family.

This is Small ribosomal subunit protein uS2 from Limosilactobacillus reuteri (strain DSM 20016) (Lactobacillus reuteri).